The primary structure comprises 240 residues: Mediator of RNA polymerase II transcription subunit 19 (240 aa).

Disordered stretches follow at residues 32–58 (GKTQ…DNSR) and 169–240 (QPPK…SGLR). 2 stretches are compositionally biased toward basic residues: residues 170 to 181 (PPKKKNKKHKQS) and 212 to 224 (RKKK…KKSR).

This sequence belongs to the Mediator complex subunit 19 family. In terms of assembly, component of the Mediator complex.

It localises to the nucleus. Its function is as follows. Component of the Mediator complex, a coactivator involved in the regulated transcription of nearly all RNA polymerase II-dependent genes. Mediator functions as a bridge to convey information from gene-specific regulatory proteins to the basal RNA polymerase II transcription machinery. Mediator is recruited to promoters by direct interactions with regulatory proteins and serves as a scaffold for the assembly of a functional preinitiation complex with RNA polymerase II and the general transcription factors. The sequence is that of Mediator of RNA polymerase II transcription subunit 19 (med19) from Xenopus laevis (African clawed frog).